The primary structure comprises 259 residues: Deoxyribose-phosphate aldolase (259 aa).

D102 (proton donor/acceptor) is an active-site residue. Residue K167 is the Schiff-base intermediate with acetaldehyde of the active site. The active-site Proton donor/acceptor is K201.

The protein belongs to the DeoC/FbaB aldolase family. DeoC type 2 subfamily.

It localises to the cytoplasm. It carries out the reaction 2-deoxy-D-ribose 5-phosphate = D-glyceraldehyde 3-phosphate + acetaldehyde. Its pathway is carbohydrate degradation; 2-deoxy-D-ribose 1-phosphate degradation; D-glyceraldehyde 3-phosphate and acetaldehyde from 2-deoxy-alpha-D-ribose 1-phosphate: step 2/2. Functionally, catalyzes a reversible aldol reaction between acetaldehyde and D-glyceraldehyde 3-phosphate to generate 2-deoxy-D-ribose 5-phosphate. The sequence is that of Deoxyribose-phosphate aldolase from Escherichia coli O45:K1 (strain S88 / ExPEC).